A 198-amino-acid polypeptide reads, in one-letter code: UPF0548 protein DR_2035 (198 aa).

It belongs to the UPF0548 family.

This chain is UPF0548 protein DR_2035, found in Deinococcus radiodurans (strain ATCC 13939 / DSM 20539 / JCM 16871 / CCUG 27074 / LMG 4051 / NBRC 15346 / NCIMB 9279 / VKM B-1422 / R1).